Consider the following 582-residue polypeptide: MANQIDEAKPISDLEIMRHSAAHIMAEAVLSMFPEAKLGIGPAIDTGFYYDFDLPRTLTPEDLPEIETRMNQLVKANLPFRREEMSKDEARKLFADQPYKLELLDDIPDEIVSVYRQGNLCDLCRGPHVNYTSKVKAFKLLSIAGAYWRGDEKRPMLQRIYGAAFLDKASLAEYLNMLEESAKRDHRKLGKELELFSLHQEIGGGLVNWLPNGAIVRHLIEEFWKKEHLKRGYSLVYTPHIAKVDLWKTSGHWGFYRENMYSPMDIDGEEYVLKPMNCVYHILMFKNRTRSYKELPIRMAELGTVYRYERSGVLHGLSRVRGFTQDDAHIFCLYEQLEKEVVKVLDLAKFMIDTFGFTRYKVMLSTRPEKYVGELDKWEYATDILAKALESNQIAYQVDPGEGVFYGPKIDIKFEDALGRAWQGPTIQVDFQLPERFDVSVVGEDGKDQPVAMVHRTVLGSMERFMSCLTEQYGGAFPVWLSPKQVMLIPIADRHSEFAEKLACELREEEVRVEVDNRSETMNQKIRQAQLAKIPYMLVVGDKEIETQSVSIRTRSGSQCVMPFAEFKSMLIDKIKTKSTEI.

The interval Asp-185 to Pro-478 is catalytic. The Zn(2+) site is built by Cys-278, His-329, and His-455.

This sequence belongs to the class-II aminoacyl-tRNA synthetase family. In terms of assembly, homodimer. Zn(2+) serves as cofactor.

The protein localises to the cytoplasm. It catalyses the reaction tRNA(Thr) + L-threonine + ATP = L-threonyl-tRNA(Thr) + AMP + diphosphate + H(+). Functionally, catalyzes the attachment of threonine to tRNA(Thr) in a two-step reaction: L-threonine is first activated by ATP to form Thr-AMP and then transferred to the acceptor end of tRNA(Thr). Also edits incorrectly charged L-seryl-tRNA(Thr). The chain is Threonine--tRNA ligase from Dehalococcoides mccartyi (strain ATCC BAA-2266 / KCTC 15142 / 195) (Dehalococcoides ethenogenes (strain 195)).